Reading from the N-terminus, the 80-residue chain is UPF0180 protein BPUM_1317 (80 aa).

It belongs to the UPF0180 family.

In Bacillus pumilus (strain SAFR-032), this protein is UPF0180 protein BPUM_1317.